The following is a 275-amino-acid chain: Diaminopimelate epimerase (275 aa).

Substrate is bound by residues Asn12, Gln45, and Asn65. The Proton donor role is filled by Cys74. Residues 75–76 (GN), Asn158, Asn191, and 209–210 (ER) contribute to the substrate site. The active-site Proton acceptor is the Cys218. 219–220 (GT) is a binding site for substrate.

It belongs to the diaminopimelate epimerase family. In terms of assembly, homodimer.

The protein localises to the cytoplasm. It carries out the reaction (2S,6S)-2,6-diaminopimelate = meso-2,6-diaminopimelate. Its pathway is amino-acid biosynthesis; L-lysine biosynthesis via DAP pathway; DL-2,6-diaminopimelate from LL-2,6-diaminopimelate: step 1/1. Catalyzes the stereoinversion of LL-2,6-diaminopimelate (L,L-DAP) to meso-diaminopimelate (meso-DAP), a precursor of L-lysine and an essential component of the bacterial peptidoglycan. This is Diaminopimelate epimerase from Shewanella baltica (strain OS223).